The chain runs to 393 residues: Putative odorant receptor 69a, isoform A (393 aa).

Topologically, residues 1–39 (MQLHDHMKYIDLGCKMACIPRYQWKGRPTERQFYASEQR) are cytoplasmic. The chain crosses the membrane as a helical span at residues 40–60 (IVFLLGTICQIFQITGVLIYW). Over 61–76 (YCNGRLATETGTFVAQ) the chain is Extracellular. Residues 77–97 (LSEMCSSFCLTFVGFCNVYAI) traverse the membrane as a helical segment. Residues 98 to 139 (STNRNQIETLLEELHQIYPRYRKNHYRCQHYFDMAMTIMRIE) lie on the Cytoplasmic side of the membrane. A helical membrane pass occupies residues 140–160 (FLFYMILYVYYNSAPLWVLLW). Residues 161–189 (EHLHEEYDLSFKTQTNTWFPWKVHGSALG) are Extracellular-facing. A helical membrane pass occupies residues 190–210 (FGMAVLSITVGSFVGVGFSIV). Residues 211–269 (TQNLICLLTFQLKLHYDGISSQLVSLDCRRPGAHKELSILIAHHSRILQLGDQVNDIMN) are Cytoplasmic-facing. Residues 270–290 (FVFGSSLVGATIAICMSSVSI) form a helical membrane-spanning segment. Residues 291-304 (MLLDLASAFKYASG) are Extracellular-facing. The chain crosses the membrane as a helical span at residues 305-325 (LVAFVLYNFVICYMGTEVTLA). The Cytoplasmic segment spans residues 326-365 (SGKVLPAAFYNNWYEGDLVYRRMLLILMMRATKPYMWKTY). The chain crosses the membrane as a helical span at residues 366–386 (KLAPVSITTYMATLKFSYQMF). Over 387–393 (TCVRSLK) the chain is Extracellular.

It belongs to the insect chemoreceptor superfamily. Heteromeric odorant receptor channel (TC 1.A.69) family. Or49a subfamily. As to quaternary structure, interacts with Orco. Complexes exist early in the endomembrane system in olfactory sensory neurons (OSNs), coupling these complexes to the conserved ciliary trafficking pathway. As to expression, expressed in olfactory sensory neurons in the antenna.

The protein localises to the cell membrane. In terms of biological role, odorant receptor which mediates acceptance or avoidance behavior, depending on its substrates. The odorant receptor repertoire encodes a large collection of odor stimuli that vary widely in identity, intensity, and duration. May form a complex with Orco to form odorant-sensing units, providing sensitive and prolonged odorant signaling and calcium permeability. In Drosophila melanogaster (Fruit fly), this protein is Putative odorant receptor 69a, isoform A (Or69a).